A 592-amino-acid polypeptide reads, in one-letter code: Bifunctional dolabella-3,7-dien-18-ol synthase/dolathalia-3,7,11-triene synthase TPS20, chloroplastic (592 aa).

The N-terminal 52 residues, 1–52, are a transit peptide targeting the chloroplast; that stretch reads MEAITKNGSLSQTLVHCGPKSLSSFIPVRCLRFSKNPFPKKLVVTRARTSIN. Mg(2+)-binding residues include Asp349, Asp353, Asp491, Thr495, and Glu499. The DDXXD motif motif lies at 349-353; it reads DDLYD.

The protein belongs to the terpene synthase family. Tpsa subfamily. Mg(2+) is required as a cofactor. Requires Mn(2+) as cofactor.

The protein localises to the plastid. The protein resides in the chloroplast. It carries out the reaction (2E,6E,10E)-geranylgeranyl diphosphate + H2O = (3E,7E)-dolabella-3,7-dien-18-ol + diphosphate. It catalyses the reaction (2E,6E,10E)-geranylgeranyl diphosphate = (3E,7E)-dolathalia-3,7,11-triene + diphosphate. It participates in secondary metabolite biosynthesis; terpenoid biosynthesis. Its function is as follows. Involved in the biosynthesis of diterpenes in roots. Possesses dolabella-3,7-dien-18-ol synthase activity and dolathalia-3,7,11-triene synthase activity in vitro. Catalyzes the formation of dolabella-3,7-dien-18-ol and dolathalia-3,7,11-triene from geranygeranyl diphosphate (GGPP). Does not seem to be involved in sesquiterpene biosynthesis. This Arabidopsis thaliana (Mouse-ear cress) protein is Bifunctional dolabella-3,7-dien-18-ol synthase/dolathalia-3,7,11-triene synthase TPS20, chloroplastic.